Reading from the N-terminus, the 239-residue chain is tRNA1(Val) (adenine(37)-N6)-methyltransferase (239 aa).

Belongs to the methyltransferase superfamily. tRNA (adenine-N(6)-)-methyltransferase family.

It localises to the cytoplasm. The enzyme catalyses adenosine(37) in tRNA1(Val) + S-adenosyl-L-methionine = N(6)-methyladenosine(37) in tRNA1(Val) + S-adenosyl-L-homocysteine + H(+). Specifically methylates the adenine in position 37 of tRNA(1)(Val) (anticodon cmo5UAC). This is tRNA1(Val) (adenine(37)-N6)-methyltransferase from Vibrio vulnificus (strain YJ016).